Reading from the N-terminus, the 336-residue chain is Myb family transcription factor PHL8 (336 aa).

An HTH myb-type domain is found at 31-91 (TDAKPRLKWT…HLQKYRLGKS (61 aa)). The H-T-H motif DNA-binding region spans 62–87 (PKGLMKVMEIPGLTLYHLKSHLQKYR). A disordered region spans residues 100–134 (EVSSASENQEVESKNDSRDLRGCSVTEENSNPAKE). Over residues 110–120 (VESKNDSRDLR) the composition is skewed to basic and acidic residues. Positions 139–159 (TEALQMQMEVQKKLHEQIEVQ) form a coiled coil. The short motif at 152–157 (LHEQIE) is the LHEQLE element.

The protein belongs to the MYB-CC family.

Its subcellular location is the nucleus. The sequence is that of Myb family transcription factor PHL8 from Arabidopsis thaliana (Mouse-ear cress).